The primary structure comprises 534 residues: MAFSTYLGSLESSLVLKGLAGVWLVWYIGRVFYNIFLHPLANVPGPLLCKFSKIPWDYWQWTGRLPQNTAKVHAKYGEIVRIGPNELSFTNNAAWNDIFAKVPGRAQWPRHPKRVPQGKNGPQSIMNTAGTYHARFRRLLNHAFSEKGLQEQQDLITKYIDIFVSKVDGFARTGQSLDVTKWFVMVGFDVISDLGWSEPFNCVENGEVHEWMKTFAETAFDTQLKFLFRERGLMFLAPYLVPMKLQLARLNNFKYARARVEERIKTGGTRGDFWDKISVKSAGDNASGEGLTKEEMVVAAVTLVGTGSHTISTLLTGLAYFLGTNPHTMKKLVDEIRTSFNSPEEIDLVSVHKLKYLTACLNETMRLYPPVINMLWRTPPQGGGHASGIFIPEGTGCNMSFFGIAQNPDYFTRPLDFCPERFLPDPPAEFRDDNHEAYHPFSLGAYNCLGQNLANAESRLIMTKLLWYFDFELDGTVDKDWLDQKSYGVFIKKELPVKFHPGPNAVRHVANGNGVATNGHANGHANGHARINTK.

Position 448 (Cys448) interacts with heme.

Belongs to the cytochrome P450 family. Heme serves as cofactor.

It functions in the pathway secondary metabolite biosynthesis; terpenoid biosynthesis. Functionally, cytochrome P450 monooxygenase; part of the gene cluster that mediates the biosynthesis of viridicatumtoxin, a tetracycline-like fungal meroterpenoid with a unique, fused spirobicyclic ring system. The first step of the pathway is the production of the malonamoyl-CoA starter unit for the polyketide synthase vrtA. The aldolase vrtJ may be involved in the synthesis of the malonamate substrate for malonamoyl-CoA synthetase vrtB. The polyketide synthase vrtA then may utilize the malonamoyl-CoA starter unit, followed by sequential condensation of eight malonyl-CoA units to form the polyketide backbone. The cyclization of the last ring could be mediated by the lactamase-like protein vrtG. The proposed post-PKS tailoring steps are a hydroxylation at C5 catalyzed the cytochrome P450 monooxygenase vrtE, a hydroxylation at C12a catalyzed by VrtH and/or VrtI, and an O-methylation by the O-methyltransferase vrtF. VrtC is then proposed to catalyze the transfer of a geranyl group synthesized by vrtD to the aromatic C ring of the tetracyclic polyketide intermediate of viridicatumtoxin to yield previridicatumtoxin. Finally, the cytochrome P450 monooxygenase vrtK catalyzes the spirocyclization of the geranyl moiety of previridicatumtoxin to afford viridicatumtoxin. This is Cytochrome P450 monooxygenase vrtK from Penicillium aethiopicum.